Reading from the N-terminus, the 92-residue chain is Small ribosomal subunit protein uS19 (92 aa).

It belongs to the universal ribosomal protein uS19 family.

Functionally, protein S19 forms a complex with S13 that binds strongly to the 16S ribosomal RNA. This Bacillus mycoides (strain KBAB4) (Bacillus weihenstephanensis) protein is Small ribosomal subunit protein uS19.